A 242-amino-acid chain; its full sequence is DNA repair protein RecO (242 aa).

Belongs to the RecO family.

Its function is as follows. Involved in DNA repair and RecF pathway recombination. This Vibrio atlanticus (strain LGP32) (Vibrio splendidus (strain Mel32)) protein is DNA repair protein RecO.